We begin with the raw amino-acid sequence, 621 residues long: DnaJ homolog subfamily C member 2 (621 aa).

Position 1 is an N-acetylmethionine (methionine 1). 4 positions are modified to phosphoserine: serine 47, serine 49, serine 60, and serine 63. The J domain occupies 88–161 (DHYAVLGLGH…VKRRAFNSVD (74 aa)). The interval 160–250 (VDPTFDNSVP…RDERRWIEKQ (91 aa)) is ZRF1-UBD. A Phosphoserine modification is found at serine 183. 2 disordered regions span residues 294-315 (EKKA…QRQA) and 427-453 (EEAE…GSKN). 2 consecutive SANT domains span residues 449–511 (NGSK…KLDP) and 549–604 (TDFT…EMVK).

In terms of assembly, component of ribosome-associated complex (RAC), a heterodimer composed of Hsp70/DnaK-type chaperone HSPA14 and Hsp40/DnaJ-type chaperone DNAJC2. Interacts (via ZRF1-UBD region) with ID1. Post-translationally, phosphorylated in M (mitotic) phase.

It localises to the nucleus. The protein localises to the cytoplasm. The protein resides in the cytosol. Acts both as a chaperone in the cytosol and as a chromatin regulator in the nucleus. When cytosolic, acts as a molecular chaperone: component of the ribosome-associated complex (RAC), a complex involved in folding or maintaining nascent polypeptides in a folding-competent state. In the RAC complex, stimulates the ATPase activity of the ribosome-associated pool of Hsp70-type chaperones HSPA14 that bind to the nascent polypeptide chain. When nuclear, mediates the switching from polycomb-repressed genes to an active state: specifically recruited at histone H2A ubiquitinated at 'Lys-119' (H2AK119ub), and promotes the displacement of the polycomb PRC1 complex from chromatin, thereby facilitating transcription activation. The polypeptide is DnaJ homolog subfamily C member 2 (DNAJC2) (Macaca fascicularis (Crab-eating macaque)).